The sequence spans 881 residues: Dynamin-like GTPase MGM1, mitochondrial (881 aa).

A mitochondrion-targeting transit peptide spans 1–59 (MNASPVRLLILRRQLATHPAILYSSPYIKSPLVHLHSRMSNVHRSAHANALSFVITRRS). Topologically, residues 60 to 72 (ISHFPKIISKIIR) are mitochondrial matrix. A helical; Signal-anchor for type II membrane protein transmembrane segment spans residues 73–92 (LPIYVGGGMAAAGSYIAYKM). Over 93–881 (EEASSFTKDK…KSYKGVSKNL (789 aa)) the chain is Mitochondrial intermembrane. The interval 145–183 (ATSLDDDESKRQGDPKDDDDEDDDDEDDENDSVDTTQDE) is disordered. Positions 160-176 (KDDDDEDDDDEDDENDS) are enriched in acidic residues. The region spanning 207–505 (HLTLPSIVVI…LEISMSNALE (299 aa)) is the Dynamin-type G domain. The segment at 217–224 (GSQSSGKS) is G1 motif. Residues Ser-220, Ser-221, Gly-222, Lys-223, Ser-224, Ser-225, and Gly-239 each contribute to the GTP site. Ser-224 provides a ligand contact to Mg(2+). The tract at residues 243 to 245 (VTR) is G2 motif. Residues Thr-244 and Asp-317 each contribute to the Mg(2+) site. Residues 317-320 (DLPG) are G3 motif. Residues 385–388 (TKLD) are G4 motif. 3 residues coordinate GTP: Lys-386, Asp-388, and Thr-415. Residues 414–417 (ITKT) form a G5 motif region. The tract at residues 668 to 780 (STADQVENCI…KMLKNKCHST (113 aa)) is paddle region. Residues Cys-777 and Cys-786 are joined by a disulfide bond. The GED domain maps to 780–872 (TIEKDRCPEV…KIDSILVFKK (93 aa)).

It belongs to the TRAFAC class dynamin-like GTPase superfamily. Dynamin/Fzo/YdjA family. Oligomeric complex consisting of membrane-bound and soluble forms of MGM1. Associates with FZO1 through interaction with the intermembrane space domain of UGO1 which binds FZO1 through its cytoplasmic domain. Cleavage of the transit peptide by mitochondrial processing protease (MPP) produces a long integral membrane form of MGM1 (l-MGM1). Further processing by the rhomboid protease PCP1 produces a short peripheral membrane form of MGM1 (s-MGM1). Both isoforms are required for full activity.

Its subcellular location is the mitochondrion inner membrane. The protein localises to the mitochondrion intermembrane space. The catalysed reaction is GTP + H2O = GDP + phosphate + H(+). Its function is as follows. Dynamin-related GTPase that is essential for normal mitochondrial morphology by mediating fusion of the mitochondrial inner membranes, regulating cristae morphology and maintaining respiratory chain function. Exists in two forms: the transmembrane, long form (Dynamin-like GTPase MGM1, long form; L-MGM1), which is tethered to the inner mitochondrial membrane, and the short soluble form (Dynamin-like GTPase MGM1, short form; S-MGM1), which results from proteolytic cleavage and localizes in the intermembrane space. Both forms (L-MGM1 and S-MGM1) cooperate to catalyze the fusion of the mitochondrial inner membrane. The equilibrium between L-MGM1 and S-MGM1 is essential: excess levels of S-MGM1, following loss of mitochondrial membrane potential, lead to an impaired equilibrium between L-MGM1 and S-MGM1, inhibiting mitochondrial fusion. Plays a role in the maintenance and remodeling of mitochondrial cristae, some invaginations of the mitochondrial inner membrane that provide an increase in the surface area. Probably acts by forming helical filaments at the inside of inner membrane tubes with the shape and dimensions of crista junctions. Functionally, constitutes the transmembrane long form (L-MGM1) that plays a central role in mitochondrial inner membrane fusion and cristae morphology. L-MGM1 and the soluble short form (S-MGM1) form higher-order helical assemblies that coordinate the fusion of mitochondrial inner membranes. Inner membrane-anchored L-MGM1 molecules initiate membrane remodeling by recruiting soluble S-MGM1 to rapidly polymerize into a flexible cylindrical scaffold encaging the mitochondrial inner membrane. Once at the membrane surface, the formation of S-MGM1 helices induce bilayer curvature. MGM1 dimerization through the paddle region, which inserts into cardiolipin-containing membrane, promotes GTP hydrolysis and the helical assembly of a flexible MGM1 lattice on the membrane, which drives membrane curvature and mitochondrial fusion. Constitutes the soluble short form (S-MGM1) generated by cleavage by PCP1, which plays a central role in mitochondrial inner membrane fusion and cristae morphology. The transmembrane long form (L-MGM1) and the S-MGM1 form higher-order helical assemblies that coordinate the fusion of mitochondrial inner membranes. Inner membrane-anchored L-MGM1 molecules initiate membrane remodeling by recruiting soluble S-MGM1 to rapidly polymerize into a flexible cylindrical scaffold encaging the mitochondrial inner membrane. Once at the membrane surface, the formation of S-MGM1 helices induce bilayer curvature. MGM1 dimerization through the paddle region, which inserts into cardiolipin-containing membrane, promotes GTP hydrolysis and the helical assembly of a flexible MGM1 lattice on the membrane, which drives membrane curvature and mitochondrial fusion. Excess levels of S-MGM1 produced by cleavage by PCP1 following stress conditions that induce loss of mitochondrial membrane potential, lead to an impaired equilibrium between L-MGM1 and S-MGM1, thereby inhibiting mitochondrial fusion. The protein is Dynamin-like GTPase MGM1, mitochondrial of Saccharomyces cerevisiae (strain ATCC 204508 / S288c) (Baker's yeast).